Consider the following 471-residue polypeptide: Probable ribonuclease FAU-1 (471 aa).

Belongs to the FAU-1 family.

Its function is as follows. Probable RNase involved in rRNA stability through maturation and/or degradation of precursor rRNAs. Binds to RNA in loop regions with AU-rich sequences. The protein is Probable ribonuclease FAU-1 of Aeropyrum pernix (strain ATCC 700893 / DSM 11879 / JCM 9820 / NBRC 100138 / K1).